Consider the following 261-residue polypeptide: RING finger protein 208 (261 aa).

The segment at 83–106 is disordered; the sequence is PALEGAPHTPPLPRRPRKGSSELG. Phosphoserine is present on serine 102. An RING-type zinc finger spans residues 143–190; that stretch reads CPTCGHSYNVTQRRPRVLSCLHSVCEQCLQILYESCPKYKFISCPTCR.

This is RING finger protein 208 (RNF208) from Homo sapiens (Human).